Consider the following 254-residue polypeptide: Ribosomal RNA small subunit methyltransferase G (254 aa).

S-adenosyl-L-methionine contacts are provided by residues Gly-92, 143 to 144 (AE), and Arg-156.

This sequence belongs to the methyltransferase superfamily. RNA methyltransferase RsmG family.

Its subcellular location is the cytoplasm. Functionally, specifically methylates the N7 position of a guanine in 16S rRNA. The polypeptide is Ribosomal RNA small subunit methyltransferase G (Leptospira interrogans serogroup Icterohaemorrhagiae serovar copenhageni (strain Fiocruz L1-130)).